Reading from the N-terminus, the 246-residue chain is Carboxymethylenebutenolidase homolog (246 aa).

Catalysis depends on residues cysteine 132, aspartate 179, and histidine 212.

It belongs to the dienelactone hydrolase family.

The protein localises to the cytoplasm. It is found in the cytosol. Functionally, cysteine hydrolase. In Xenopus tropicalis (Western clawed frog), this protein is Carboxymethylenebutenolidase homolog (cmbl).